A 212-amino-acid chain; its full sequence is Orotate phosphoribosyltransferase (212 aa).

K26 lines the 5-phospho-alpha-D-ribose 1-diphosphate pocket. Position 34-35 (34-35 (FF)) interacts with orotate. Residues 72-73 (YK), R98, K99, K102, H104, and 123-131 (DDVITAGTA) contribute to the 5-phospho-alpha-D-ribose 1-diphosphate site. Orotate-binding residues include T127 and R155.

The protein belongs to the purine/pyrimidine phosphoribosyltransferase family. PyrE subfamily. As to quaternary structure, homodimer. The cofactor is Mg(2+).

The catalysed reaction is orotidine 5'-phosphate + diphosphate = orotate + 5-phospho-alpha-D-ribose 1-diphosphate. It functions in the pathway pyrimidine metabolism; UMP biosynthesis via de novo pathway; UMP from orotate: step 1/2. Its function is as follows. Catalyzes the transfer of a ribosyl phosphate group from 5-phosphoribose 1-diphosphate to orotate, leading to the formation of orotidine monophosphate (OMP). The protein is Orotate phosphoribosyltransferase of Marinobacter nauticus (strain ATCC 700491 / DSM 11845 / VT8) (Marinobacter aquaeolei).